Reading from the N-terminus, the 298-residue chain is Inosose dehydratase (298 aa).

This sequence belongs to the IolE/MocC family. Requires glutathione as cofactor. Co(2+) serves as cofactor. It depends on Mn(2+) as a cofactor.

It carries out the reaction scyllo-inosose = 3D-3,5/4-trihydroxycyclohexane-1,2-dione + H2O. Its function is as follows. Catalyzes the dehydration of inosose (2-keto-myo-inositol, 2KMI or 2,4,6/3,5-pentahydroxycyclohexanone) to 3D-(3,5/4)-trihydroxycyclohexane-1,2-dione (D-2,3-diketo-4-deoxy-epi-inositol). The sequence is that of Inosose dehydratase from Erwinia tasmaniensis (strain DSM 17950 / CFBP 7177 / CIP 109463 / NCPPB 4357 / Et1/99).